The primary structure comprises 422 residues: Probable ornithine aminotransferase, mitochondrial (422 aa).

Lys273 is modified (N6-(pyridoxal phosphate)lysine).

It belongs to the class-III pyridoxal-phosphate-dependent aminotransferase family. Pyridoxal 5'-phosphate serves as cofactor.

The protein resides in the mitochondrion matrix. The enzyme catalyses a 2-oxocarboxylate + L-ornithine = L-glutamate 5-semialdehyde + an L-alpha-amino acid. The protein operates within amino-acid biosynthesis; L-proline biosynthesis; L-glutamate 5-semialdehyde from L-ornithine: step 1/1. The polypeptide is Probable ornithine aminotransferase, mitochondrial (Caenorhabditis elegans).